The following is a 299-amino-acid chain: uncharacterized protein (299 aa).

The protein belongs to the glycosyltransferase 2 family.

This is an uncharacterized protein from Mycoplasma pneumoniae (strain ATCC 29342 / M129 / Subtype 1) (Mycoplasmoides pneumoniae).